The chain runs to 430 residues: MKITINQASEFVGKEVTIGAWLANKRSSGKIAFLQLRDGTGFMQGVVVKAEVGDDMFATAKALTQETSLFVTGTINEDTRSPFGYEMAVSGVEVISESHDYPITPKEHGTEFLMDHRHLWLRSNRQHAIMKIRNEIIRASYEFFNKEGFLKIDPPILTGSAPEGTTELFHTKYFDEDAFLSQSGQLYMEAAAMAFGKVFSFGPTFRAEKSKTRRHLIEFWMIEPEMAFYKLEDSLQVQENYVAFLVKAVLDNCRLELDRLGRDVSHLEKMVAPFPRITYTEAIERLHELGFDDIVWGDDFGAPHETAIADSFEKPVFITHYPKAIKPFYMPEDPENDQVVLCADMIAPEGYGEIIGGSERIHDLETLQARMEDFDLDQEAYSWYLDLARYGSVPHSGFGLGLERTVAWISGTEHVRETIPFPRLLNRLYP.

This sequence belongs to the class-II aminoacyl-tRNA synthetase family. In terms of assembly, homodimer.

It is found in the cytoplasm. The enzyme catalyses tRNA(Asn) + L-asparagine + ATP = L-asparaginyl-tRNA(Asn) + AMP + diphosphate + H(+). The polypeptide is Asparagine--tRNA ligase (Listeria innocua serovar 6a (strain ATCC BAA-680 / CLIP 11262)).